The following is a 361-amino-acid chain: Protein RecA (361 aa).

An ATP-binding site is contributed by 77-84 (GPESSGKT).

This sequence belongs to the RecA family.

It localises to the cytoplasm. Can catalyze the hydrolysis of ATP in the presence of single-stranded DNA, the ATP-dependent uptake of single-stranded DNA by duplex DNA, and the ATP-dependent hybridization of homologous single-stranded DNAs. It interacts with LexA causing its activation and leading to its autocatalytic cleavage. This Sinorhizobium medicae (strain WSM419) (Ensifer medicae) protein is Protein RecA.